The sequence spans 490 residues: MARFEEQKLYIGGRYVEASSGATFETINPANGEVLAKVQRASREDVERAVQSAVEGQKVWAAMTAMQRSRILRRAVDLLRERNDELAALETLDTGKPLAETRAVDIVTGADVLEYYAGLVPAIEGEQIPLRETSFVYTRREPLGVVAGIGAWNYPVQIALWKSAPALAAGNAMIFKPSEVTPLTALKLAEIYTEAGVPDGVFNVLTGSGREVGQWLTEHPLIEKISFTGGTSTGKKVMASASSSSLKEVTMELGGKSPLIIFPDADLDRAADIAVMANFFSSGQVCTNGTRVFIHRSQQARFEAKVLERVQRIRLGDPQDENTNFGPLVSFPHMESVLGYIESGKAQKARLLCGGERVTEGAFGNGAYVAPTVFTDCSDDMTIVREEIFGPVMSILVYDDEDEAIRRANDTEYGLAAGVVTQDLARAHRAIHRLEAGICWINTWGESPAEMPVGGYKQSGVGRENGLTTLAHYTRIKSVQVELGDYASVF.

Thr-26, Ile-27, and Asp-93 together coordinate K(+). Gly-150–Trp-152 contributes to the NAD(+) binding site. The Charge relay system role is filled by Lys-162. Lys-176–Glu-179 lines the NAD(+) pocket. Val-180 provides a ligand contact to K(+). Gly-230–Thr-233 serves as a coordination point for NAD(+). Residue Leu-246 coordinates K(+). The active-site Proton acceptor is the Glu-252. Gly-254, Cys-286, and Glu-387 together coordinate NAD(+). Cys-286 serves as the catalytic Nucleophile. Cysteine sulfenic acid (-SOH) is present on Cys-286. Residues Lys-457 and Gly-460 each coordinate K(+). Residue Glu-464 is the Charge relay system of the active site.

Belongs to the aldehyde dehydrogenase family. As to quaternary structure, dimer of dimers. It depends on K(+) as a cofactor.

The enzyme catalyses betaine aldehyde + NAD(+) + H2O = glycine betaine + NADH + 2 H(+). It participates in amine and polyamine biosynthesis; betaine biosynthesis via choline pathway; betaine from betaine aldehyde: step 1/1. Involved in the biosynthesis of the osmoprotectant glycine betaine. Catalyzes the irreversible oxidation of betaine aldehyde to the corresponding acid. This chain is Betaine aldehyde dehydrogenase, found in Pseudomonas paraeruginosa (strain DSM 24068 / PA7) (Pseudomonas aeruginosa (strain PA7)).